The chain runs to 514 residues: CBL-interacting protein kinase 25 (514 aa).

The region spanning 21 to 281 (YEFGPLVGEG…IPEIMEMRWF (261 aa)) is the Protein kinase domain. ATP is bound by residues 27 to 35 (VGEGNFAKV) and Lys50. The active-site Proton acceptor is the Asp149. Residues 167 to 196 (DFGLSALADMERREAHLQTVCGTPLFLAPE) form an activation loop region. The interval 303–340 (GLDGEPELYDSDTDTIESSSSSESPTPVAGTPRGMHTS) is disordered. Positions 304-317 (LDGEPELYDSDTDT) are enriched in acidic residues. The span at 318–329 (IESSSSSESPTP) shows a compositional bias: low complexity. The region spanning 323–395 (SSESPTPVAG…PSFDLSGLFE (73 aa)) is the NAF domain. Residues 398-427 (GERMRFVSGAPVADIIAKLQEIAGMVSFTA) form a PPI region.

This sequence belongs to the protein kinase superfamily. CAMK Ser/Thr protein kinase family. SNF1 subfamily. Mn(2+) serves as cofactor.

The catalysed reaction is L-seryl-[protein] + ATP = O-phospho-L-seryl-[protein] + ADP + H(+). It catalyses the reaction L-threonyl-[protein] + ATP = O-phospho-L-threonyl-[protein] + ADP + H(+). CIPK serine-threonine protein kinases interact with CBL proteins. Binding of a CBL protein to the regulatory NAF domain of CIPK protein lead to the activation of the kinase in a calcium-dependent manner. The chain is CBL-interacting protein kinase 25 (CIPK25) from Oryza sativa subsp. japonica (Rice).